Reading from the N-terminus, the 440-residue chain is MQAYFEQIEKVRYEGSQSDNPFAFRHYNPDQEILGKRMADHLRFAVAYWHTFCWNGADMFGVGSFARPWQQSGDALELAKRKADIAFEFFQKLSVPYYCFHDVDIAPEGNSLKEYLHNFAVITDVLAEKQQDSGVKLLWGTANCFTHPRYGAGAATNPDPDVFAWAATQVFTAMNATKKLGGENYVLWGGREGYETLLNTDLRQEREQIGRFMQMVVEHKHKIGFQGTLLIEPKPQEPTKHQYDYDVATVYGFLKQFGLEKEIKVNVEANHATLAGHSFHHEIATAVALGVFGSVDANRGDPQLGWDTDQFPNSVEENTLIMYEILKAGGFTTGGLNFDAKVRRQSTDRYDLFHAHIGAMDTMALALKAAARMIEDDKLNQLVAKRYAGWNGELGQQILQGKASLESLAHYAESHQLAPQHQSGQQELLENLVNRHLYPK.

The Mg(2+) site is built by D307 and D309.

This sequence belongs to the xylose isomerase family. Homotetramer. Mg(2+) is required as a cofactor.

It localises to the cytoplasm. It carries out the reaction alpha-D-xylose = alpha-D-xylulofuranose. The protein is Xylose isomerase of Pectobacterium carotovorum subsp. carotovorum (strain PC1).